A 98-amino-acid chain; its full sequence is MSYFRWDGEDLILDCHLQPKASKDEFAGLHGERLKIRLTAPPVEGKANAHLLAFLAKAFGVAKAQVSLESGELNRHKRLRIHAPQRLPTLPGLIFPGK.

This sequence belongs to the UPF0235 family.

The protein is UPF0235 protein Pmen_4153 of Ectopseudomonas mendocina (strain ymp) (Pseudomonas mendocina).